The primary structure comprises 148 residues: MMLRAWRLMVLLAAYCYYVFANCSISTTTAPVEWKSPNRQIPKNITCANYSGTVGGNVTFQGLKNKTEDFLSWLLGSGYKSICSFFPQLPGDSNEQHYRYEVTNLTYNCTYDRLTLLNLTTENSRNYYFRREDANSTFYYSCYNLTVS.

Positions 1 to 21 (MMLRAWRLMVLLAAYCYYVFA) are cleaved as a signal peptide. N-linked (GlcNAc...) asparagine; by host glycosylation is found at N22, N44, N49, N57, N65, N104, N108, N118, N135, and N144.

This sequence belongs to the RL11 family. In terms of processing, N-glycosylated and possibly O-glycosylated.

Its subcellular location is the virion membrane. This is Early glycoprotein GP48 (UL4) from Homo sapiens (Human).